The chain runs to 224 residues: Ribonuclease 3 (224 aa).

The 124-residue stretch at 4–127 (IEKLERSLTY…IIGAIHLEAG (124 aa)) folds into the RNase III domain. Glutamate 40 lines the Mg(2+) pocket. Aspartate 44 is a catalytic residue. 2 residues coordinate Mg(2+): aspartate 113 and glutamate 116. Glutamate 116 is an active-site residue. The DRBM domain maps to 154–223 (DYKTKLQEIT…AKIALEKLGA (70 aa)).

The protein belongs to the ribonuclease III family. Homodimer. Mg(2+) is required as a cofactor.

It localises to the cytoplasm. The enzyme catalyses Endonucleolytic cleavage to 5'-phosphomonoester.. Functionally, digests double-stranded RNA. Involved in the processing of primary rRNA transcript to yield the immediate precursors to the large and small rRNAs (23S and 16S). Processes some mRNAs, and tRNAs when they are encoded in the rRNA operon. Processes pre-crRNA and tracrRNA of type II CRISPR loci if present in the organism. The polypeptide is Ribonuclease 3 (Campylobacter jejuni (strain RM1221)).